A 309-amino-acid chain; its full sequence is Thioredoxin reductase (309 aa).

35-42 serves as a coordination point for FAD; the sequence is EKQFPGGK. The cysteines at positions 134 and 137 are disulfide-linked. 277–286 serves as a coordination point for FAD; sequence DIVDKNVRQI.

This sequence belongs to the class-II pyridine nucleotide-disulfide oxidoreductase family. As to quaternary structure, homodimer. Requires FAD as cofactor.

It is found in the cytoplasm. It catalyses the reaction [thioredoxin]-dithiol + NADP(+) = [thioredoxin]-disulfide + NADPH + H(+). In Ureaplasma parvum serovar 3 (strain ATCC 700970), this protein is Thioredoxin reductase (trxB).